The chain runs to 291 residues: NADH-cytochrome b5 reductase 2 (291 aa).

The chain crosses the membrane as a helical span at residues 7-23 (PIAATSVVAAAASSYYF). The FAD-binding FR-type domain occupies 41-145 (DQWVDLKLKS…KGPIIKYQWQ (105 aa)). An FAD-binding site is contributed by 148–183 (LHKEITLIGAGTGITPLYQLISAINKNPEDKTKVNL).

Belongs to the flavoprotein pyridine nucleotide cytochrome reductase family. The cofactor is FAD.

Its subcellular location is the mitochondrion outer membrane. It catalyses the reaction 2 Fe(III)-[cytochrome b5] + NADH = 2 Fe(II)-[cytochrome b5] + NAD(+) + H(+). May mediate the reduction of outer membrane cytochrome b5. This is NADH-cytochrome b5 reductase 2 (MCR1) from Yarrowia lipolytica (strain CLIB 122 / E 150) (Yeast).